The following is a 976-amino-acid chain: Mast/stem cell growth factor receptor Kit (976 aa).

Positions 1–25 are cleaved as a signal peptide; the sequence is MRGARGAWDFLCVLLLLLRVQTGSS. The Extracellular portion of the chain corresponds to 26 to 524; sequence QPSVSPGEPS…QIHPHTLFTP (499 aa). Ig-like C2-type domains lie at 27–112, 121–205, 212–308, 317–410, and 413–507; these read PSVS…VFVR, DRSL…LKVR, PVVS…LEVV, PMIN…VYVN, and PEIL…FNFA. Cysteines 58 and 97 form a disulfide. Residues asparagine 130 and asparagine 145 are each glycosylated (N-linked (GlcNAc...) asparagine). Intrachain disulfides connect cysteine 136–cysteine 186, cysteine 151–cysteine 183, and cysteine 233–cysteine 290. 8 N-linked (GlcNAc...) asparagine glycosylation sites follow: asparagine 283, asparagine 293, asparagine 300, asparagine 320, asparagine 352, asparagine 367, asparagine 463, and asparagine 486. An intrachain disulfide couples cysteine 428 to cysteine 491. A helical transmembrane segment spans residues 525 to 545; that stretch reads LLIGFVIVAGMMCIIVMILTY. Over 546–976 the chain is Cytoplasmic; the sequence is KYLQKPMYEV…SQPLLVHDDV (431 aa). 4 positions are modified to phosphotyrosine; by autocatalysis: tyrosine 547, tyrosine 553, tyrosine 568, and tyrosine 570. Residue tyrosine 568 coordinates Mg(2+). An important for interaction with phosphotyrosine-binding proteins region spans residues 568–570; that stretch reads YVY. The Protein kinase domain maps to 589 to 937; the sequence is LSFGKTLGAG…ISESTNHIYS (349 aa). Residues 596-603, lysine 623, and 671-677 contribute to the ATP site; these read GAGAFGKV and EYCCYGD. 3 positions are modified to phosphotyrosine; by autocatalysis: tyrosine 703, tyrosine 721, and tyrosine 730. Serine 741 and serine 746 each carry phosphoserine; by PKC/PRKCA. Aspartate 792 serves as the catalytic Proton acceptor. Arginine 796 contributes to the ATP binding site. Asparagine 797 and aspartate 810 together coordinate Mg(2+). Residue serine 821 is modified to Phosphoserine. Phosphotyrosine; by autocatalysis is present on tyrosine 823. Position 891 is a phosphoserine (serine 891). Phosphotyrosine; by autocatalysis is present on residues tyrosine 900 and tyrosine 936. Residue serine 959 is modified to Phosphoserine.

This sequence belongs to the protein kinase superfamily. Tyr protein kinase family. CSF-1/PDGF receptor subfamily. Monomer in the absence of bound KITLG/SCF. Homodimer in the presence of bound KITLG/SCF, forming a heterotetramer with two KITLG/SCF molecules. Interacts (via phosphorylated tyrosine residues) with the adapter proteins GRB2 and GRB7 (via SH2 domain), and SH2B2/APS. Interacts (via C-terminus) with MPDZ (via the tenth PDZ domain). Interacts (via phosphorylated tyrosine residues) with PIK3R1 and PIK3 catalytic subunit. Interacts (via phosphorylated tyrosine) with CRK (isoform Crk-II), FYN, SHC1 and MATK/CHK (via SH2 domain). Interacts with LYN and FES/FPS. Interacts (via phosphorylated tyrosine residues) with the protein phosphatases PTPN6/SHP-1 (via SH2 domain), PTPN11/SHP-2 (via SH2 domain) and PTPRU. Interacts with PLCG1. Interacts with DOK1 and TEC. Interacts (KITLG/SCF-bound) with IL1RL1. Interacts with IL1RAP (independent of stimulation with KITLG/SCF). A mast cell-specific KITLG/SCF-induced interleukin-33 signaling complex contains IL1RL1, IL1RAP, KIT and MYD88. Post-translationally, ubiquitinated by SOCS6. KIT is rapidly ubiquitinated after autophosphorylation induced by KITLG/SCF binding, leading to internalization and degradation. Autophosphorylated on tyrosine residues. KITLG/SCF binding enhances autophosphorylation. Isoform 1 shows low levels of tyrosine phosphorylation in the absence of added KITLG/SCF (in vitro). Kinase activity is down-regulated by phosphorylation on serine residues by protein kinase C family members. Phosphorylation at Tyr-568 is required for interaction with PTPN11/SHP-2, CRK (isoform Crk-II) and members of the SRC tyrosine-protein kinase family. Phosphorylation at Tyr-570 is required for interaction with PTPN6/SHP-1. Phosphorylation at Tyr-703, Tyr-823 and Tyr-936 is important for interaction with GRB2. Phosphorylation at Tyr-721 is important for interaction with PIK3R1. Phosphorylation at Tyr-823 and Tyr-936 is important for interaction with GRB7. As to expression, in testis, detected in spermatogonia in the basal layer and in interstitial Leydig cells but not in Sertoli cells or spermatocytes inside the seminiferous tubules (at protein level). Expression is maintained in ejaculated spermatozoa (at protein level).

The protein localises to the cell membrane. The protein resides in the cytoplasm. It carries out the reaction L-tyrosyl-[protein] + ATP = O-phospho-L-tyrosyl-[protein] + ADP + H(+). Present in an inactive conformation in the absence of bound ligand. KITLG/SCF binding leads to dimerization and activation by autophosphorylation on tyrosine residues. Activity is down-regulated by PRKCA-mediated phosphorylation on serine residues. Inhibited by imatinib/STI-571 (Gleevec) and sunitinib; these compounds maintain the kinase in an inactive conformation. Functionally, tyrosine-protein kinase that acts as a cell-surface receptor for the cytokine KITLG/SCF and plays an essential role in the regulation of cell survival and proliferation, hematopoiesis, stem cell maintenance, gametogenesis, mast cell development, migration and function, and in melanogenesis. In response to KITLG/SCF binding, KIT can activate several signaling pathways. Phosphorylates PIK3R1, PLCG1, SH2B2/APS and CBL. Activates the AKT1 signaling pathway by phosphorylation of PIK3R1, the regulatory subunit of phosphatidylinositol 3-kinase. Activated KIT also transmits signals via GRB2 and activation of RAS, RAF1 and the MAP kinases MAPK1/ERK2 and/or MAPK3/ERK1. Promotes activation of STAT family members STAT1, STAT3, STAT5A and STAT5B. Activation of PLCG1 leads to the production of the cellular signaling molecules diacylglycerol and inositol 1,4,5-trisphosphate. KIT signaling is modulated by protein phosphatases, and by rapid internalization and degradation of the receptor. Activated KIT promotes phosphorylation of the protein phosphatases PTPN6/SHP-1 and PTPRU, and of the transcription factors STAT1, STAT3, STAT5A and STAT5B. Promotes phosphorylation of PIK3R1, CBL, CRK (isoform Crk-II), LYN, MAPK1/ERK2 and/or MAPK3/ERK1, PLCG1, SRC and SHC1. The sequence is that of Mast/stem cell growth factor receptor Kit (KIT) from Homo sapiens (Human).